The sequence spans 635 residues: Sodium-dependent multivitamin transporter (635 aa).

The next 3 membrane-spanning stretches (helical) occupy residues phenylalanine 24–leucine 44, cysteine 68–valine 88, and phenylalanine 101–phenylalanine 121. An N-linked (GlcNAc...) asparagine glycan is attached at asparagine 138. The next 9 membrane-spanning stretches (helical) occupy residues valine 143–alanine 163, leucine 176–leucine 196, valine 199–isoleucine 219, phenylalanine 256–alanine 276, valine 297–alanine 317, phenylalanine 336–isoleucine 356, isoleucine 396–isoleucine 416, isoleucine 428–phenylalanine 448, and alanine 456–valine 476. N-linked (GlcNAc...) asparagine glycosylation is found at asparagine 489 and asparagine 498. The helical transmembrane segment at leucine 528–leucine 548 threads the bilayer.

This sequence belongs to the sodium:solute symporter (SSF) (TC 2.A.21) family. As to quaternary structure, interacts with PDZD11. May be glycosylated. Expressed in microvessels of the brain (at protein level). Expressed in heart, brain, placenta, lung, liver, skeletal muscle, kidney, and pancreas.

The protein localises to the cell membrane. It is found in the apical cell membrane. It carries out the reaction biotin(out) + 2 Na(+)(out) = biotin(in) + 2 Na(+)(in). It catalyses the reaction (R)-pantothenate(out) + 2 Na(+)(out) = (R)-pantothenate(in) + 2 Na(+)(in). The catalysed reaction is (R)-lipoate(out) + 2 Na(+)(out) = (R)-lipoate(in) + 2 Na(+)(in). The enzyme catalyses iodide(out) + 2 Na(+)(out) = iodide(in) + 2 Na(+)(in). In terms of biological role, sodium-dependent multivitamin transporter that mediates the electrogenic transport of pantothenate, biotin, lipoate and iodide. Functions as a Na(+)-coupled substrate symporter where the stoichiometry of Na(+):substrate is 2:1, creating an electrochemical Na(+) gradient used as driving force for substrate uptake. Required for biotin and pantothenate uptake in the intestine across the brush border membrane. Plays a role in the maintenance of intestinal mucosa integrity, by providing the gut mucosa with biotin. Contributes to the luminal uptake of biotin and pantothenate into the brain across the blood-brain barrier. The protein is Sodium-dependent multivitamin transporter of Homo sapiens (Human).